Here is a 264-residue protein sequence, read N- to C-terminus: Thymidylate synthase (264 aa).

DUMP is bound at residue Arg21. A (6R)-5,10-methylene-5,6,7,8-tetrahydrofolate-binding site is contributed by His51. 126–127 contributes to the dUMP binding site; sequence RR. Cys146 (nucleophile) is an active-site residue. Residues 166–169, Asn177, and 207–209 contribute to the dUMP site; these read RSAD and HLY. Asp169 is a binding site for (6R)-5,10-methylene-5,6,7,8-tetrahydrofolate. Ala263 serves as a coordination point for (6R)-5,10-methylene-5,6,7,8-tetrahydrofolate.

This sequence belongs to the thymidylate synthase family. Bacterial-type ThyA subfamily. Homodimer.

It is found in the cytoplasm. It catalyses the reaction dUMP + (6R)-5,10-methylene-5,6,7,8-tetrahydrofolate = 7,8-dihydrofolate + dTMP. The protein operates within pyrimidine metabolism; dTTP biosynthesis. In terms of biological role, catalyzes the reductive methylation of 2'-deoxyuridine-5'-monophosphate (dUMP) to 2'-deoxythymidine-5'-monophosphate (dTMP) while utilizing 5,10-methylenetetrahydrofolate (mTHF) as the methyl donor and reductant in the reaction, yielding dihydrofolate (DHF) as a by-product. This enzymatic reaction provides an intracellular de novo source of dTMP, an essential precursor for DNA biosynthesis. The chain is Thymidylate synthase from Bartonella bacilliformis (strain ATCC 35685 / KC583 / Herrer 020/F12,63).